We begin with the raw amino-acid sequence, 434 residues long: 5-methylthioadenosine/S-adenosylhomocysteine deaminase (434 aa).

Zn(2+) contacts are provided by His-66 and His-68. 3 residues coordinate substrate: Glu-95, Arg-148, and His-188. His-215 provides a ligand contact to Zn(2+). Residues Glu-218 and Asp-304 each coordinate substrate. Position 304 (Asp-304) interacts with Zn(2+).

It belongs to the metallo-dependent hydrolases superfamily. MTA/SAH deaminase family. It depends on Zn(2+) as a cofactor.

The enzyme catalyses S-adenosyl-L-homocysteine + H2O + H(+) = S-inosyl-L-homocysteine + NH4(+). It carries out the reaction S-methyl-5'-thioadenosine + H2O + H(+) = S-methyl-5'-thioinosine + NH4(+). Its function is as follows. Catalyzes the deamination of 5-methylthioadenosine and S-adenosyl-L-homocysteine into 5-methylthioinosine and S-inosyl-L-homocysteine, respectively. Is also able to deaminate adenosine. The protein is 5-methylthioadenosine/S-adenosylhomocysteine deaminase of Shouchella clausii (strain KSM-K16) (Alkalihalobacillus clausii).